The primary structure comprises 79 residues: DNA-directed RNA polymerase subunit omega (79 aa).

It belongs to the RNA polymerase subunit omega family. In terms of assembly, in cyanobacteria the RNAP catalytic core is composed of 2 alpha, 1 beta, 1 beta', 1 gamma and 1 omega subunit. When a sigma factor is associated with the core the holoenzyme is formed, which can initiate transcription.

The catalysed reaction is RNA(n) + a ribonucleoside 5'-triphosphate = RNA(n+1) + diphosphate. Its function is as follows. Promotes RNA polymerase assembly. Latches the N- and C-terminal regions of the beta' subunit thereby facilitating its interaction with the beta and alpha subunits. The polypeptide is DNA-directed RNA polymerase subunit omega (Synechococcus sp. (strain JA-3-3Ab) (Cyanobacteria bacterium Yellowstone A-Prime)).